The chain runs to 305 residues: Acetylglutamate kinase (305 aa).

Residues 75 to 76 (GG), arginine 97, and asparagine 202 each bind substrate.

Belongs to the acetylglutamate kinase family. ArgB subfamily.

It localises to the cytoplasm. It catalyses the reaction N-acetyl-L-glutamate + ATP = N-acetyl-L-glutamyl 5-phosphate + ADP. The protein operates within amino-acid biosynthesis; L-arginine biosynthesis; N(2)-acetyl-L-ornithine from L-glutamate: step 2/4. Catalyzes the ATP-dependent phosphorylation of N-acetyl-L-glutamate. The protein is Acetylglutamate kinase of Rhodospirillum centenum (strain ATCC 51521 / SW).